The primary structure comprises 547 residues: DNA polymerase kappa (547 aa).

The segment at 18–39 (LTIEDDGSSSSDEEATLKRRLA) is disordered. Residues 20–31 (IEDDGSSSSDEE) are compositionally biased toward acidic residues. One can recognise a UmuC domain in the interval 132-316 (IVHVDCDAFY…LPVREVSGIG (185 aa)). Mg(2+) contacts are provided by Asp136 and Asp226. The segment at 489 to 518 (TVPCPVCQKNIENELGILNQHVDLCLNVET) adopts a UBZ4-type zinc-finger fold. Residues Cys492, Cys495, His509, and Cys513 each contribute to the Zn(2+) site.

Interacts with hus1 and rad17.

It is found in the cytoplasm. The protein localises to the nucleus. The enzyme catalyses DNA(n) + a 2'-deoxyribonucleoside 5'-triphosphate = DNA(n+1) + diphosphate. Its function is as follows. DNA polymerase specifically involved in DNA repair. Plays an important role in translesion synthesis, where the normal high-fidelity DNA polymerases cannot proceed and DNA synthesis stalls. Has a role in meiosis. This is DNA polymerase kappa (mug40) from Schizosaccharomyces pombe (strain 972 / ATCC 24843) (Fission yeast).